The following is a 414-amino-acid chain: MSLSTKLAITDVDLKGKNVLIRVDFNVPLDGDRITNNARIVGALPTIKYALEQQPKAVILMSHLGRPNGARVAKYSLKPVAAELSKLLGKPVKFLDDCVGPEVEKACKEAKGGEVILLENLRFHIEEEGSAKVDGKKVKADASAVEAFRKSLTSLGDIFVNDAFGTAHRAHSSMVGVDLPRVSGFLMKKELDYFSKALENPARPFLAILGGAKVADKIQLIDNLLDKVNRLIICGGMAFTFLKVLNGMKIGDSLFDEAGSKNVESMMAKAKKNNVEVFLPVDFVTADKFDKDAKVGSATAEEGIPDGWMGLDCGPKSSAKFAEVITTSKTIVWNGPAGVFEFDNFAKGTKSMLDACVKTCEAGNVVIVGGGDTATVAKKYGKEDALSHVSTGGGASLELLEGKALPGVVALSSK.

9 residues coordinate (2R)-3-phosphoglycerate: valine 23, aspartate 24, phenylalanine 25, asparagine 26, arginine 39, serine 62, histidine 63, glycine 65, and arginine 66. The residue at position 75 (tyrosine 75) is a Phosphotyrosine. Residue serine 76 is modified to Phosphoserine. Residues leucine 121 and arginine 122 each contribute to the (2R)-3-phosphoglycerate site. Residue serine 143 is modified to Phosphoserine. The (2R)-3-phosphoglycerate site is built by histidine 168 and arginine 169. A phosphoserine mark is found at serine 172, serine 173, and serine 183. Glycine 211 is a binding site for ADP. A CDP-binding site is contributed by glycine 211. Positions 212 and 213 each coordinate AMP. An ATP-binding site is contributed by alanine 212. Residue alanine 212 participates in Mg(2+) binding. Mg(2+) is bound by residues alanine 215 and aspartate 216. CDP is bound at residue aspartate 216. Lysine 217 provides a ligand contact to AMP. Residue lysine 217 coordinates ATP. ADP is bound at residue glycine 235. Glycine 235 is a binding site for CDP. Glycine 236 provides a ligand contact to AMP. Glycine 236 serves as a coordination point for ATP. Phosphoserine is present on residues serine 253 and serine 260. Threonine 299 is subject to Phosphothreonine. Glycine 310 serves as a coordination point for AMP. Glycine 310 lines the ATP pocket. At serine 328 the chain carries Phosphoserine. The CDP site is built by glycine 335, alanine 337, and phenylalanine 340. ADP is bound at residue phenylalanine 340. An AMP-binding site is contributed by glutamate 341. Glutamate 341 contacts ATP. At serine 351 the chain carries Phosphoserine. Residues aspartate 372 and threonine 373 each contribute to the ATP site. Aspartate 372 lines the Mg(2+) pocket. Threonine 373 is subject to Phosphothreonine. Phosphoserine occurs at positions 387, 390, 412, and 413.

The protein belongs to the phosphoglycerate kinase family. As to quaternary structure, monomer. Mg(2+) serves as cofactor.

It is found in the cytoplasm. It localises to the mitochondrion. It carries out the reaction (2R)-3-phosphoglycerate + ATP = (2R)-3-phospho-glyceroyl phosphate + ADP. It participates in carbohydrate degradation; glycolysis; pyruvate from D-glyceraldehyde 3-phosphate: step 2/5. In terms of biological role, catalyzes one of the two ATP producing reactions in the glycolytic pathway via the reversible conversion of 1,3-diphosphoglycerate to 3-phosphoglycerate. Both L- and D- forms of purine and pyrimidine nucleotides can be used as substrates, but the activity is much lower on pyrimidines. Negatively regulates the biosynthesis of acetyl-CoA from pyruvate in the mitochondrion. This is Phosphoglycerate kinase (pgk1) from Schizosaccharomyces pombe (strain 972 / ATCC 24843) (Fission yeast).